The following is a 315-amino-acid chain: Ornithine carbamoyltransferase, anabolic (315 aa).

Carbamoyl phosphate contacts are provided by residues 57 to 60 (STRT), glutamine 84, arginine 108, and 135 to 138 (HPCQ). L-ornithine contacts are provided by residues asparagine 166, aspartate 230, and 234–235 (SM). Residues 270–271 (CL) and arginine 298 contribute to the carbamoyl phosphate site.

Belongs to the aspartate/ornithine carbamoyltransferase superfamily. OTCase family. Homododecamer (tetramer of trimers).

It localises to the cytoplasm. The enzyme catalyses carbamoyl phosphate + L-ornithine = L-citrulline + phosphate + H(+). Its pathway is amino-acid biosynthesis; L-arginine biosynthesis; L-arginine from L-ornithine and carbamoyl phosphate: step 1/3. Its activity is regulated as follows. Inhibited by the bisubstrate delta-N-phosphonoacetyl-L-ornithine (PALO). In terms of biological role, reversibly catalyzes the transfer of the carbamoyl group from carbamoyl phosphate (CP) to the N(epsilon) atom of ornithine (ORN) to produce L-citrulline, which is a substrate for argininosuccinate synthetase, the enzyme involved in the final step in arginine biosynthesis. This chain is Ornithine carbamoyltransferase, anabolic, found in Pyrococcus furiosus (strain ATCC 43587 / DSM 3638 / JCM 8422 / Vc1).